The primary structure comprises 257 residues: Aspartate/glutamate leucyltransferase (257 aa).

Belongs to the R-transferase family. Bpt subfamily.

Its subcellular location is the cytoplasm. It catalyses the reaction N-terminal L-glutamyl-[protein] + L-leucyl-tRNA(Leu) = N-terminal L-leucyl-L-glutamyl-[protein] + tRNA(Leu) + H(+). The catalysed reaction is N-terminal L-aspartyl-[protein] + L-leucyl-tRNA(Leu) = N-terminal L-leucyl-L-aspartyl-[protein] + tRNA(Leu) + H(+). In terms of biological role, functions in the N-end rule pathway of protein degradation where it conjugates Leu from its aminoacyl-tRNA to the N-termini of proteins containing an N-terminal aspartate or glutamate. The protein is Aspartate/glutamate leucyltransferase of Leptospira interrogans serogroup Icterohaemorrhagiae serovar copenhageni (strain Fiocruz L1-130).